The chain runs to 218 residues: MQADFWHARWANNQIGFHLDEINPYLMRHLSRLRLQAGERILVPLCGKTLDLAWLAAQGLEVLGVELSEKAVSDFFEEHDLRPEIDQLGGFRRYRVAGITLLQGDFFALQAEHLAQCRAFYDRAALIALPPEMRERYAGHLQAVLPTRSLGLLVTIDYPQAEMAGPPFAVPDEEVRGYYAGGWRIEELERGDVLGVNWKFLERGVSWLNEAVYLLERG.

Residues W10, L45, E66, and R123 each contribute to the S-adenosyl-L-methionine site.

This sequence belongs to the class I-like SAM-binding methyltransferase superfamily. TPMT family.

It localises to the cytoplasm. It catalyses the reaction S-adenosyl-L-methionine + a thiopurine = S-adenosyl-L-homocysteine + a thiopurine S-methylether.. The polypeptide is Thiopurine S-methyltransferase (Pseudomonas aeruginosa (strain UCBPP-PA14)).